The primary structure comprises 475 residues: MSPQTETKASVGFKAGVKDYKLTYYTPDYETKDTDILAAFRVTPQPGVPPEEAGAAVRAESSTGTWTTVWTDGLTSLDRYKGRCYHIEPVAGEENQYIAYVAYPLDLFEEGSVTNMFTSIVGNVFGFKALRALRLEGLRIPPAYSKTFQGPPHGIQVERDKLNKYGRPLLGCTIKPKLGLSAKNYGRAVYECLRGGLDFTKDDENVNSQPFMRWRDRFVFCAEAIDKAQAETGEIKGHYLNATAGTCEEMIKRAVFARELGVPIVMHDYLTGGFTANTSLAHYCRDNGLLLHIHRAMHAVIDRQKNHGIHFRVLAKALRMSGGDHIHAGTVVGKLEGERGITLGFVDLLRDDFIEKDRSRGIYFTQDWVSLPGVLPVASGGIHVWHMPALTEIFGDDSVLQFGGGTLGHPWGNAPGAVANRVALEACVQARNEGGDLAREGNEIIREASKWSPELAAACEVWKEIKFEFQAMDTL.

A propeptide spanning residues 1-2 is cleaved from the precursor; the sequence is MS. Pro3 carries the post-translational modification N-acetylproline. Lys14 is subject to N6,N6,N6-trimethyllysine. Asn123 and Thr173 together coordinate substrate. The active-site Proton acceptor is the Lys175. Lys177 contacts substrate. Mg(2+) is bound by residues Lys201, Asp203, and Glu204. Lys201 is modified (N6-carboxylysine). Catalysis depends on His294, which acts as the Proton acceptor. Substrate is bound by residues Arg295, His327, and Ser379.

It belongs to the RuBisCO large chain family. Type I subfamily. Heterohexadecamer of 8 large chains and 8 small chains; disulfide-linked. The disulfide link is formed within the large subunit homodimers. It depends on Mg(2+) as a cofactor. In terms of processing, the disulfide bond which can form in the large chain dimeric partners within the hexadecamer appears to be associated with oxidative stress and protein turnover.

It is found in the plastid. Its subcellular location is the chloroplast. It carries out the reaction 2 (2R)-3-phosphoglycerate + 2 H(+) = D-ribulose 1,5-bisphosphate + CO2 + H2O. The catalysed reaction is D-ribulose 1,5-bisphosphate + O2 = 2-phosphoglycolate + (2R)-3-phosphoglycerate + 2 H(+). Functionally, ruBisCO catalyzes two reactions: the carboxylation of D-ribulose 1,5-bisphosphate, the primary event in carbon dioxide fixation, as well as the oxidative fragmentation of the pentose substrate in the photorespiration process. Both reactions occur simultaneously and in competition at the same active site. This Notothixos subaureus (Golden mistletoe) protein is Ribulose bisphosphate carboxylase large chain.